We begin with the raw amino-acid sequence, 1048 residues long: Putative truncated guanine nucleotide exchange factor SDC25 (1048 aa).

Disordered stretches follow at residues 208–242 (SKQG…VSGS) and 419–444 (LNLD…DEYE). Positions 212–224 (TSCSSETSHHSPS) are enriched in low complexity. Residues 578–710 (SNNRIKGGSK…LLKEVNQKFK (133 aa)) form the N-terminal Ras-GEF domain. Residues 748–995 (DPVLFATQLT…YQLSLIIEPK (248 aa)) enclose the Ras-GEF domain. The interval 997 to 1048 (RKKVVPNSNSNNKSQEKSRDDQTDEGKTSTKKDRFPKFQLHKTKKKAPKVSK) is disordered. The span at 1010–1032 (SQEKSRDDQTDEGKTSTKKDRFP) shows a compositional bias: basic and acidic residues. The span at 1035 to 1048 (QLHKTKKKAPKVSK) shows a compositional bias: basic residues.

Promotes the exchange of Ras-bound GDP by GTP. The chain is Putative truncated guanine nucleotide exchange factor SDC25 (SDC25) from Saccharomyces cerevisiae (strain ATCC 204508 / S288c) (Baker's yeast).